Here is a 494-residue protein sequence, read N- to C-terminus: Aspartyl/glutamyl-tRNA(Asn/Gln) amidotransferase subunit B (494 aa).

This sequence belongs to the GatB/GatE family. GatB subfamily. As to quaternary structure, heterotrimer of A, B and C subunits.

The catalysed reaction is L-glutamyl-tRNA(Gln) + L-glutamine + ATP + H2O = L-glutaminyl-tRNA(Gln) + L-glutamate + ADP + phosphate + H(+). It catalyses the reaction L-aspartyl-tRNA(Asn) + L-glutamine + ATP + H2O = L-asparaginyl-tRNA(Asn) + L-glutamate + ADP + phosphate + 2 H(+). In terms of biological role, allows the formation of correctly charged Asn-tRNA(Asn) or Gln-tRNA(Gln) through the transamidation of misacylated Asp-tRNA(Asn) or Glu-tRNA(Gln) in organisms which lack either or both of asparaginyl-tRNA or glutaminyl-tRNA synthetases. The reaction takes place in the presence of glutamine and ATP through an activated phospho-Asp-tRNA(Asn) or phospho-Glu-tRNA(Gln). The polypeptide is Aspartyl/glutamyl-tRNA(Asn/Gln) amidotransferase subunit B (Synechococcus elongatus (strain ATCC 33912 / PCC 7942 / FACHB-805) (Anacystis nidulans R2)).